The sequence spans 231 residues: Dephospho-CoA kinase domain-containing protein (231 aa).

The region spanning 3-207 is the DPCK domain; it reads LVGLTGGIAS…RSLEYLPLRF (205 aa). Residue 8 to 15 coordinates ATP; it reads GGIASGKS.

It belongs to the CoaE family.

The chain is Dephospho-CoA kinase domain-containing protein (DCAKD) from Homo sapiens (Human).